Consider the following 37-residue polypeptide: Cytochrome b6-f complex subunit 5 (37 aa).

A helical transmembrane segment spans residues 5–25 (LLCGIVLGLIPITLAGLFVAA).

It belongs to the PetG family. As to quaternary structure, the 4 large subunits of the cytochrome b6-f complex are cytochrome b6, subunit IV (17 kDa polypeptide, PetD), cytochrome f and the Rieske protein, while the 4 small subunits are PetG, PetL, PetM and PetN. The complex functions as a dimer.

It is found in the cellular thylakoid membrane. Its function is as follows. Component of the cytochrome b6-f complex, which mediates electron transfer between photosystem II (PSII) and photosystem I (PSI), cyclic electron flow around PSI, and state transitions. PetG is required for either the stability or assembly of the cytochrome b6-f complex. The polypeptide is Cytochrome b6-f complex subunit 5 (Cyanothece sp. (strain PCC 7425 / ATCC 29141)).